A 484-amino-acid chain; its full sequence is Chromosomal replication initiator protein DnaA (484 aa).

The interval 1 to 73 (MQEGKNIWSL…EILIEKGHNT (73 aa)) is domain I, interacts with DnaA modulators. The tract at residues 73–140 (TINVEFINSP…EEIHTKYRNP (68 aa)) is domain II. The domain III, AAA+ region stretch occupies residues 141–357 (FLKKKYTFEN…AAVTKLKAHI (217 aa)). G185, G187, K188, and T189 together coordinate ATP. The domain IV, binds dsDNA stretch occupies residues 358–484 (DLEDIEIDTS…IELMNKINKK (127 aa)).

The protein belongs to the DnaA family. In terms of assembly, oligomerizes as a right-handed, spiral filament on DNA at oriC.

Its subcellular location is the cytoplasm. Plays an essential role in the initiation and regulation of chromosomal replication. ATP-DnaA binds to the origin of replication (oriC) to initiate formation of the DNA replication initiation complex once per cell cycle. Binds the DnaA box (a 9 base pair repeat at the origin) and separates the double-stranded (ds)DNA. Forms a right-handed helical filament on oriC DNA; dsDNA binds to the exterior of the filament while single-stranded (ss)DNA is stabiized in the filament's interior. The ATP-DnaA-oriC complex binds and stabilizes one strand of the AT-rich DNA unwinding element (DUE), permitting loading of DNA polymerase. After initiation quickly degrades to an ADP-DnaA complex that is not apt for DNA replication. Binds acidic phospholipids. This is Chromosomal replication initiator protein DnaA from Borrelia hermsii (strain HS1 / DAH).